A 199-amino-acid chain; its full sequence is Large ribosomal subunit protein bL25 (199 aa).

This sequence belongs to the bacterial ribosomal protein bL25 family. CTC subfamily. As to quaternary structure, part of the 50S ribosomal subunit; part of the 5S rRNA/L5/L18/L25 subcomplex. Contacts the 5S rRNA. Binds to the 5S rRNA independently of L5 and L18.

Functionally, this is one of the proteins that binds to the 5S RNA in the ribosome where it forms part of the central protuberance. This chain is Large ribosomal subunit protein bL25, found in Chlorobaculum tepidum (strain ATCC 49652 / DSM 12025 / NBRC 103806 / TLS) (Chlorobium tepidum).